The following is a 2871-amino-acid chain: Fibrillin-1 (2871 aa).

The signal sequence occupies residues 1–24 (MRRGRLLEVALGFTVLLASYTSHR). Positions 25 to 44 (AEANLEAGNGKETRASRAKR) are excised as a propeptide. The span at 29–39 (LEAGNGKETRA) shows a compositional bias: basic and acidic residues. The interval 29-49 (LEAGNGKETRASRAKRRGGGG) is disordered. The interval 45 to 81 (RGGGGHDALKGPNVCGSRYNAYCCPGWKTLPGGNQCI) is fibrillin unique N-terminal (FUN) domain. The tract at residues 45–450 (RGGGGHDALK…PPRVLPVNVT (406 aa)) is N-terminal domain. 11 disulfides stabilise this stretch: Cys59–Cys68, Cys67–Cys80, Cys85–Cys94, Cys89–Cys100, Cys102–Cys111, Cys119–Cys129, Cys123–Cys134, Cys136–Cys145, Cys150–Cys160, Cys154–Cys166, and Cys168–Cys177. EGF-like domains follow at residues 81 to 112 (IVPI…PSCG), 115 to 146 (SIQH…THCG), and 147 to 178 (QPVC…PQCE). An interaction with MFAP4 region spans residues 119-329 (CNIRCMNGGS…YTSPDGTRCI (211 aa)). A TB 1 domain is found at 184-236 (GPCFTVVSNQMCQGQLSGIVCTKTLCCATVGRAWGHPCEMCPAQPHPCRRGFI). The tract at residues 195–221 (CQGQLSGIVCTKTLCCATVGRAWGHPC) is hybrid domain 1. The 42-residue stretch at 246–287 (DVDECQAIPGLCQGGNCINTVGSFECKCPAGHKFNEVSQKCE) folds into the EGF-like 4; calcium-binding domain. Cystine bridges form between Cys250–Cys262, Cys257–Cys271, Cys273–Cys286, Cys292–Cys304, Cys299–Cys313, and Cys315–Cys328. Ser268 is a glycosylation site (O-linked (Glc) serine). Residues 288–329 (DIDECSTIPGICDGGECTNTVSSYFCKCPPGFYTSPDGTRCI) enclose the EGF-like 5; calcium-binding domain. Residues 334–389 (GYCYTALTNGRCSNQLPQSITKMQCCCDVGRCWSPGVTVTPEMCPIRATEDFNKLC) form the TB 2 domain. Asn448 carries an N-linked (GlcNAc...) asparagine glycan. The region spanning 449 to 489 (VTDYCQLFRYLCHNGRCIPTPGSYRCECNKGFQLDLRGECI) is the EGF-like 6 domain. 15 disulfide bridges follow: Cys453–Cys465, Cys460–Cys474, Cys476–Cys488, Cys494–Cys504, Cys499–Cys513, Cys515–Cys528, Cys534–Cys546, Cys541–Cys555, Cys557–Cys570, Cys576–Cys587, Cys582–Cys596, Cys598–Cys611, Cys617–Cys628, Cys623–Cys637, and Cys639–Cys652. Residue Ser471 is glycosylated (O-linked (Glc) serine). The 40-residue stretch at 490–529 (DVDECEKNPCAGGECINNQGSYTCQCRPGYQSTLTRTECR) folds into the EGF-like 7; calcium-binding domain. Ser510 carries an O-linked (Glc) serine glycan. Positions 530-571 (DIDECLQNGRICNNGRCINTDGSFHCVCNAGFHVTRDGKNCE) constitute an EGF-like 8; calcium-binding domain. Residues 572–612 (DMDECSIRNMCLNGMCINEDGSFKCICKPGFQLASDGRYCK) form the EGF-like 9; calcium-binding domain. An EGF-like 10; calcium-binding domain is found at 613-653 (DINECETSGICMNGRCVNTDGSYRCECFPGLAVGLDGRVCV). The region spanning 659 to 711 (STCYGGYKRGQCVKPLFGAVTKSECCCASTEYAFGEPCQPCPSQNSAEYQALC) is the TB 3 domain. The 42-residue stretch at 723–764 (DINECALDPDICPNGICENLRGTYKCICNSGYEVDSTGKNCV) folds into the EGF-like 11; calcium-binding domain. 16 disulfide bridges follow: Cys727/Cys739, Cys734/Cys748, Cys750/Cys763, Cys769/Cys781, Cys776/Cys790, Cys792/Cys805, Cys811/Cys821, Cys816/Cys830, Cys832/Cys845, Cys853/Cys875, Cys862/Cys887, Cys876/Cys890, Cys896/Cys908, Cys914/Cys926, Cys921/Cys935, and Cys937/Cys950. In terms of domain architecture, EGF-like 12; calcium-binding spans 765–806 (DINECVLNSLLCDNGQCRNTPGSFVCTCPKGFIYKPDLKTCE). The 40-residue stretch at 807 to 846 (DIDECESSPCINGVCKNSPGSFICECSSESTLDPTKTICI) folds into the EGF-like 13; calcium-binding domain. The region spanning 851 to 902 (GTCWQTIIDGRCEININGATLKSQCCSSLGAAWGSPCTPCQVDPICGKGYSR) is the TB 4 domain. The tract at residues 862 to 887 (CEININGATLKSQCCSSLGAAWGSPC) is hybrid domain 2. The EGF-like 14; calcium-binding domain maps to 910–951 (DIDECEVFPGVCKNGLCVNSKGSFKCQCPNGMTLDATGRICL). Positions 956–1008 (ETCFLRYEDEECTLPVVGRHRMDACCCSVGAAWGTEECEECPPRNTPEYEELC) constitute a TB 5 domain. The 42-residue stretch at 1028–1069 (DINECKMIPNLCTHGKCRNTIGSFKCRCDSGFALDSEERNCI) folds into the EGF-like 15; calcium-binding domain. 43 cysteine pairs are disulfide-bonded: Cys1032/Cys1044, Cys1039/Cys1053, Cys1055/Cys1068, Cys1074/Cys1086, Cys1081/Cys1095, Cys1097/Cys1111, Cys1117/Cys1129, Cys1124/Cys1138, Cys1140/Cys1153, Cys1159/Cys1171, Cys1201/Cys1212, Cys1208/Cys1221, Cys1223/Cys1236, Cys1242/Cys1254, Cys1249/Cys1263, Cys1265/Cys1278, Cys1284/Cys1296, Cys1291/Cys1305, Cys1307/Cys1320, Cys1326/Cys1339, Cys1333/Cys1348, Cys1350/Cys1361, Cys1367/Cys1380, Cys1374/Cys1389, Cys1391/Cys1402, Cys1408/Cys1420, Cys1415/Cys1429, Cys1450/Cys1461, Cys1456/Cys1470, Cys1472/Cys1485, Cys1491/Cys1502, Cys1497/Cys1511, Cys1513/Cys1526, Cys1534/Cys1562, Cys1549/Cys1574, Cys1563/Cys1577, Cys1564/Cys1589, Cys1610/Cys1622, Cys1617/Cys1631, Cys1633/Cys1646, Cys1652/Cys1663, Cys1658/Cys1672, and Cys1674/Cys1687. One can recognise an EGF-like 16; calcium-binding domain in the interval 1070–1112 (DIDECRISPDLCGRGQCVNTPGDFECKCDEGYESGFMMMKNCM). One can recognise an EGF-like 17; calcium-binding domain in the interval 1113–1154 (DIDECQRDPLLCRGGVCLNTEGSYRCECPSGHQMSPNISACI). Ser1135 carries an O-linked (Glc) serine glycan. Asn1149 carries an N-linked (GlcNAc...) asparagine glycan. An EGF-like 18; calcium-binding domain is found at 1155-1196 (DINECELSAHLCPHGRCVNLIGKYQRARNPGYHSTPDRLFCV). Residues 1197–1237 (DIDECSIMNGGCETFCTNSEGSYECSCQPGFALMPDQRSCT) enclose the EGF-like 19; calcium-binding domain. An O-linked (Glc) serine glycan is attached at Ser1218. One can recognise an EGF-like 20; calcium-binding domain in the interval 1238-1279 (DIDECEDNPNICDGGQCTNIPGEYRCLCYDGFMASEDMKTCV). The 42-residue stretch at 1280-1321 (DVNECDLNPNICLSGTCENTKGSFICHCDMGYSGKKGKTGCT) folds into the EGF-like 21; calcium-binding domain. Residue Ser1302 is glycosylated (O-linked (Glc) serine). An EGF-like 22; calcium-binding domain is found at 1322–1362 (DINECEIGAHNCDRHAVCTNTAGSFNCSCSPGWIGDGIKCT). O-linked (Glc) serine glycosylation is present at Ser1345. Asn1347 carries an N-linked (GlcNAc...) asparagine glycan. Residues 1363-1403 (DLDECSNGTHMCSQHADCKNTMGSYRCLCKEGYTGDGFTCA) form the EGF-like 23; calcium-binding domain. The N-linked (GlcNAc...) asparagine glycan is linked to Asn1369. A glycan (O-linked (Glc) serine) is linked at Ser1386. The region spanning 1404–1445 (DLDECSENVKLCGNVQCLYAPGGYHCEYDMGFVPSADRKSCV) is the EGF-like 24; calcium-binding domain. Positions 1446 to 1486 (DSDECSLPNICVFGTCHNLPGLFRCECEIGYELDRSGGNCT) constitute an EGF-like 25; calcium-binding domain. Asn1484 is a glycosylation site (N-linked (GlcNAc...) asparagine). The EGF-like 26; calcium-binding domain maps to 1487–1527 (DVNECLEPPTCISGNCVNTPGSYTCVCPPDFELNPTRVGCV). Residue Ser1508 is glycosylated (O-linked (Glc) serine). The tract at residues 1528 to 2731 (DTRSGNCYLD…GYPKRGRKRR (1204 aa)) is C-terminal domain. Residues 1532 to 1589 (GNCYLDVRPRGDNGDTACSNEIGVGVSKASCCCSLGKAWGTPCEQCPPVNTSEYKILC) enclose the TB 6 domain. Positions 1541–1543 (RGD) match the Cell attachment site motif. Asn1581 carries an N-linked (GlcNAc...) asparagine glycan. In terms of domain architecture, EGF-like 27; calcium-binding spans 1606–1647 (DIDECQELPGLCQGGKCINTFGSFQCRCPTGYYLNEDTRVCD). O-linked (Glc) serine glycosylation is present at Ser1628. The EGF-like 28; calcium-binding domain maps to 1648 to 1688 (DVNECETPGICGPGTCYNTVGNYTCICPPDYMQVNGGNNCM). The N-linked (GlcNAc...) asparagine glycan is linked to Asn1669. The region spanning 1693 to 1748 (SLCYRNYYADNQTCDGELLFNMTKKMCCCSYNIGRAWNKPCEQCPIPSTDEFATLC) is the TB 7 domain. Residues Asn1703 and Asn1713 are each glycosylated (N-linked (GlcNAc...) asparagine). Residues 1766-1807 (DIDECREIPGVCENGVCINMVGSFRCECPVGFFYNDKLLVCE) enclose the EGF-like 29; calcium-binding domain. 40 disulfide bridges follow: Cys1770-Cys1782, Cys1777-Cys1791, Cys1793-Cys1806, Cys1812-Cys1824, Cys1818-Cys1833, Cys1835-Cys1847, Cys1853-Cys1865, Cys1860-Cys1874, Cys1876-Cys1889, Cys1895-Cys1905, Cys1900-Cys1914, Cys1916-Cys1928, Cys1934-Cys1947, Cys1942-Cys1956, Cys1958-Cys1971, Cys1977-Cys1989, Cys1984-Cys1998, Cys2000-Cys2011, Cys2017-Cys2029, Cys2024-Cys2038, Cys2040-Cys2053, Cys2061-Cys2083, Cys2070-Cys2096, Cys2084-Cys2099, Cys2085-Cys2111, Cys2131-Cys2142, Cys2137-Cys2151, Cys2153-Cys2164, Cys2170-Cys2181, Cys2176-Cys2190, Cys2192-Cys2204, Cys2210-Cys2221, Cys2217-Cys2230, Cys2232-Cys2245, Cys2251-Cys2265, Cys2258-Cys2274, Cys2276-Cys2289, Cys2295-Cys2307, Cys2302-Cys2316, and Cys2318-Cys2331. Residues 1808–1848 (DIDECQNGPVCQRNAECINTAGSYRCDCKPGYRFTSTGQCN) enclose the EGF-like 30; calcium-binding domain. Ser1830 carries an O-linked (Glc) serine glycan. The EGF-like 31; calcium-binding domain maps to 1849–1890 (DRNECQEIPNICSHGQCIDTVGSFYCLCHTGFKTNADQTMCL). The O-linked (Glc) serine glycan is linked to Ser1871. Residues 1891-1929 (DINECERDACGNGTCRNTIGSFNCRCNHGFILSHNNDCI) form the EGF-like 32; calcium-binding domain. The N-linked (GlcNAc...) asparagine glycan is linked to Asn1902. Ser1911 carries an O-linked (Glc) serine glycan. The region spanning 1930–1972 (DVDECATGNGNLCRNGQCINTVGSFQCQCNEGYEVAPDGRTCV) is the EGF-like 33; calcium-binding domain. Ser1953 is a glycosylation site (O-linked (Glc) serine). In terms of domain architecture, EGF-like 34; calcium-binding spans 1973–2012 (DINECLLEPGKCAPGTCQNLDGSYRCICPPGYSLQNDKCE). The region spanning 2013-2054 (DIDECVEEPEICALGTCSNTEGSFKCLCPDGFSLSSTGRRCQ) is the EGF-like 35; calcium-binding domain. Ser2035 carries O-linked (Glc) serine glycosylation. Positions 2059 to 2111 (SYCYAKFEGGKCSSPKSRNHSKQECCCALKGEGWGDPCELCPTEPDEAFRQIC) constitute a TB 8 domain. An N-linked (GlcNAc...) asparagine glycan is attached at Asn2077. The region spanning 2127–2165 (DMDECKEPDVCKHGQCINTDGSYRCECPFGYILEGNECV) is the EGF-like 36; calcium-binding domain. O-linked (Glc) serine glycosylation occurs at Ser2148. The 40-residue stretch at 2166-2205 (DTDECSVGNPCGNGTCKNVIGGFECTCEEGFEPGPMMTCE) folds into the EGF-like 37; calcium-binding domain. Asn2178 is a glycosylation site (N-linked (GlcNAc...) asparagine). The 41-residue stretch at 2206-2246 (DINECAQNPLLCAFRCVNTYGSYECKCPTGYVLREDRRMCK) folds into the EGF-like 38; calcium-binding domain. Ser2227 carries an O-linked (Glc) serine glycan. An EGF-like 39; calcium-binding domain is found at 2247-2290 (DEDECEEGKHDCAEKQMECKNLIGMYICICGPGYQRRPDGEGCV). The EGF-like 40; calcium-binding domain maps to 2291 to 2332 (DENECQTKPGICENGRCLNTRGSYTCECNDGFTASPTQDECL). O-linked (Glc) serine glycosylation is present at Ser2313. Positions 2337-2390 (GYCFTEVLQNMCQIGSSNRNPVTKSECCCDGGRGWGPHCEICPFQGTVAFKKLC) constitute a TB 9 domain. The EGF-like 41; calcium-binding domain maps to 2402-2443 (DIDECKVIHDVCRNGECINDRGSYHCICKTGYTPDITGTACV). 21 disulfide bridges follow: Cys2406–Cys2418, Cys2413–Cys2427, Cys2429–Cys2442, Cys2448–Cys2459, Cys2455–Cys2468, Cys2470–Cys2483, Cys2489–Cys2500, Cys2496–Cys2509, Cys2511–Cys2522, Cys2528–Cys2541, Cys2535–Cys2550, Cys2552–Cys2565, Cys2571–Cys2581, Cys2577–Cys2590, Cys2592–Cys2605, Cys2611–Cys2622, Cys2617–Cys2631, Cys2633–Cys2646, Cys2652–Cys2663, Cys2659–Cys2672, and Cys2674–Cys2686. The EGF-like 42; calcium-binding domain occupies 2444-2484 (DLNECNQAPKPCNFICKNTEGSYQCSCPKGYILQEDGRSCK). A glycan (O-linked (Glc) serine) is linked at Ser2465. Residues 2485–2523 (DLDECATKQHNCQFLCVNTIGSFACKCPPGFTQHHTACI) form the EGF-like 43; calcium-binding domain. An EGF-like 44; calcium-binding domain is found at 2524-2566 (DNNECTSDINLCGAKGICQNTPGSFTCECQRGFSLDQSGASCE). Ser2547 is a glycosylation site (O-linked (Glc) serine). In terms of domain architecture, EGF-like 45; calcium-binding spans 2567–2606 (DVDECEGNHRCQHGCQNIIGGYRCSCPQGYLQHYQWNQCV). Residues 2607–2647 (DENECLSAHICGGASCHNTLGSYKCMCPAGFQYEQFSGGCQ) enclose the EGF-like 46; calcium-binding domain. O-linked (Glc) serine glycosylation is present at Ser2628. Residues 2648-2687 (DINECGSSQAPCSYGCSNTEGGYLCGCPPGYFRIGQGHCV) form the EGF-like 47; calcium-binding domain. Residues Ser2702 and Ser2709 each carry the phosphoserine modification. N-linked (GlcNAc...) asparagine glycosylation is found at Asn2734, Asn2750, and Asn2767.

The protein belongs to the fibrillin family. As to quaternary structure, interacts with COL16A1. Interacts with integrin alpha-V/beta-3. Interacts with ADAMTS10; this interaction promotes microfibril assembly. Interacts with THSD4; this interaction promotes fibril formation. Interacts (via N-terminal domain) with FBLN2 and FBLN5. Interacts with ELN. Forms a ternary complex with ELN and FBLN2 or FBLN5 and a significant interaction with ELN seen only in the presence of FBLN2 or FBLN5. Interacts (via N-terminal domain) with LTBP2 (via C-terminal domain) in a Ca(+2)-dependent manner. Interacts (via N-terminal domain) with LTBP1 (via C-terminal domain). Interacts with integrins ITGA5:ITGB1, ITGAV:ITGB3 and ITGAV:ITGB6. Interacts (via N-terminal domain) with BMP2, BMP4, BMP7, BMP10 and GDF5. Interacts (via N-terminal domain) with MFAP2 and MFAP5. Interacts with ADAMTSL5. Interacts with MFAP4. Interacts (via N-terminal domain) with TNFSF11 in a Ca(+2)-dependent manner. Interacts (via N-terminal domain) with EFEMP2; this interaction inhibits EFEMP2 binding to LOX and ELN. Cleavage of N- and C-terminus by furin is required for incorporation into the extracellular matrix and assembly into microfibrils. The C-terminus, which corresponds to the Asprosin chain, was initially thought to constitute a propeptide. Fibrillin-1 and Asprosin chains are still linked together during the secretion from cells, but are subsequently separated by furin, an essential step for incorporation of Fibrillin-1 into the nascent microfibrils. Post-translationally, forms intermolecular disulfide bonds either with other fibrillin-1 molecules or with other components of the microfibrils. In terms of processing, O-glycosylated on serine residues by POGLUT2 and POGLUT3 which is necessary for efficient protein secretion.

It localises to the secreted. It is found in the extracellular space. The protein localises to the extracellular matrix. In terms of biological role, structural component of the 10-12 nm diameter microfibrils of the extracellular matrix, which conveys both structural and regulatory properties to load-bearing connective tissues. Fibrillin-1-containing microfibrils provide long-term force bearing structural support. In tissues such as the lung, blood vessels and skin, microfibrils form the periphery of the elastic fiber, acting as a scaffold for the deposition of elastin. In addition, microfibrils can occur as elastin-independent networks in tissues such as the ciliary zonule, tendon, cornea and glomerulus where they provide tensile strength and have anchoring roles. Fibrillin-1 also plays a key role in tissue homeostasis through specific interactions with growth factors, such as the bone morphogenetic proteins (BMPs), growth and differentiation factors (GDFs) and latent transforming growth factor-beta-binding proteins (LTBPs), cell-surface integrins and other extracellular matrix protein and proteoglycan components. Regulates osteoblast maturation by controlling TGF-beta bioavailability and calibrating TGF-beta and BMP levels, respectively. Negatively regulates osteoclastogenesis by binding and sequestering an osteoclast differentiation and activation factor TNFSF11. This leads to disruption of TNFSF11-induced Ca(2+) signaling and impairment of TNFSF11-mediated nuclear translocation and activation of transcription factor NFATC1 which regulates genes important for osteoclast differentiation and function. Mediates cell adhesion via its binding to cell surface receptors integrins ITGAV:ITGB3 and ITGA5:ITGB1. Binds heparin and this interaction plays an important role in the assembly of microfibrils. Functionally, hormone that targets the liver to increase plasma glucose levels. Secreted by white adipose tissue and circulates in the plasma. Acts in response to fasting and promotes blood glucose elevation by binding to the surface of hepatocytes. Promotes hepatocyte glucose release by activating the protein kinase A activity in the liver, resulting in rapid glucose release into the circulation. The sequence is that of Fibrillin-1 from Sus scrofa (Pig).